The following is a 250-amino-acid chain: ATP synthase subunit a (250 aa).

Helical transmembrane passes span 26 to 46 (FTNASLFMAASAAVAAGFLYF), 84 to 104 (FFPLVFSLFMFVLTANLLGMF), 114 to 134 (IIVTFALAILVISTVLIYGFY), 143 to 163 (VFVPSGVPGILLPLVVAIEII), 193 to 213 (FVASLGALGAVGVGGAVLPLI), and 216 to 236 (VALTGLEFLVAFLQAYVFAVL).

This sequence belongs to the ATPase A chain family. In terms of assembly, F-type ATPases have 2 components, CF(1) - the catalytic core - and CF(0) - the membrane proton channel. CF(1) has five subunits: alpha(3), beta(3), gamma(1), delta(1), epsilon(1). CF(0) has three main subunits: a(1), b(2) and c(9-12). The alpha and beta chains form an alternating ring which encloses part of the gamma chain. CF(1) is attached to CF(0) by a central stalk formed by the gamma and epsilon chains, while a peripheral stalk is formed by the delta and b chains.

The protein resides in the cell inner membrane. Key component of the proton channel; it plays a direct role in the translocation of protons across the membrane. This Rhizobium etli (strain ATCC 51251 / DSM 11541 / JCM 21823 / NBRC 15573 / CFN 42) protein is ATP synthase subunit a.